A 137-amino-acid chain; its full sequence is Phosphoribosyl-AMP cyclohydrolase (137 aa).

Asp-84 provides a ligand contact to Mg(2+). Cys-85 contributes to the Zn(2+) binding site. Mg(2+) contacts are provided by Asp-86 and Asp-88. Zn(2+) is bound by residues Cys-101 and Cys-108.

The protein belongs to the PRA-CH family. Homodimer. The cofactor is Mg(2+). It depends on Zn(2+) as a cofactor.

The protein resides in the cytoplasm. It catalyses the reaction 1-(5-phospho-beta-D-ribosyl)-5'-AMP + H2O = 1-(5-phospho-beta-D-ribosyl)-5-[(5-phospho-beta-D-ribosylamino)methylideneamino]imidazole-4-carboxamide. It participates in amino-acid biosynthesis; L-histidine biosynthesis; L-histidine from 5-phospho-alpha-D-ribose 1-diphosphate: step 3/9. In terms of biological role, catalyzes the hydrolysis of the adenine ring of phosphoribosyl-AMP. This Prosthecochloris aestuarii (strain DSM 271 / SK 413) protein is Phosphoribosyl-AMP cyclohydrolase.